The sequence spans 278 residues: Elongation factor Ts (278 aa).

The tract at residues 79–82 is involved in Mg(2+) ion dislocation from EF-Tu; sequence TDFV.

It belongs to the EF-Ts family.

It localises to the cytoplasm. Its function is as follows. Associates with the EF-Tu.GDP complex and induces the exchange of GDP to GTP. It remains bound to the aminoacyl-tRNA.EF-Tu.GTP complex up to the GTP hydrolysis stage on the ribosome. This chain is Elongation factor Ts, found in Borrelia duttonii (strain Ly).